A 102-amino-acid chain; its full sequence is Cuticle protein AM/CP1114 (102 aa).

A Chitin-binding type R&amp;R domain is found at 16-81 (DGNFHYSFET…VESPLLPSIP (66 aa)). The segment covering 23–33 (FETSNGIQDTK) has biased composition (polar residues). The segment at 23–50 (FETSNGIQDTKTGVPGSAGQSNMNGDFS) is disordered.

As to expression, arthrodial membrane and calcified shell.

This Cancer pagurus (Rock crab) protein is Cuticle protein AM/CP1114.